The sequence spans 412 residues: Acetate kinase (412 aa).

N10 serves as a coordination point for Mg(2+). K17 lines the ATP pocket. The interval 40-61 is disordered; the sequence is ETSRLAHTPSAGGGAEPRERTG. R95 serves as a coordination point for substrate. D152 (proton donor/acceptor) is an active-site residue. Residues 212-216, 286-288, and 334-338 each bind ATP; these read HLGNG, DMR, and GVGEN. E388 lines the Mg(2+) pocket.

Belongs to the acetokinase family. As to quaternary structure, homodimer. Mg(2+) serves as cofactor. Requires Mn(2+) as cofactor.

The protein localises to the cytoplasm. The enzyme catalyses acetate + ATP = acetyl phosphate + ADP. Its pathway is metabolic intermediate biosynthesis; acetyl-CoA biosynthesis; acetyl-CoA from acetate: step 1/2. Its function is as follows. Catalyzes the formation of acetyl phosphate from acetate and ATP. Can also catalyze the reverse reaction. This Streptomyces griseus subsp. griseus (strain JCM 4626 / CBS 651.72 / NBRC 13350 / KCC S-0626 / ISP 5235) protein is Acetate kinase.